A 145-amino-acid polypeptide reads, in one-letter code: Cell wall synthesis protein CwsA (145 aa).

The helical transmembrane segment at 104 to 124 (WIFAGIAAAILAGGAVAFSIV) threads the bilayer.

It belongs to the CwsA family. In terms of assembly, interacts with CrgA and Wag31.

The protein localises to the cell membrane. Functionally, required for regulated cell division, cell wall synthesis and the maintenance of cell shape. This is Cell wall synthesis protein CwsA from Mycobacterium tuberculosis (strain ATCC 25618 / H37Rv).